The primary structure comprises 199 residues: Recombination protein RecR (199 aa).

A C4-type zinc finger spans residues 57–72; that stretch reads CRQCRTLTEDELCPQC. Residues 80-174 form the Toprim domain; sequence SLLCVVQSPV…TISRIAHGVP (95 aa).

This sequence belongs to the RecR family.

May play a role in DNA repair. It seems to be involved in an RecBC-independent recombinational process of DNA repair. It may act with RecF and RecO. In Stutzerimonas stutzeri (strain A1501) (Pseudomonas stutzeri), this protein is Recombination protein RecR.